Consider the following 67-residue polypeptide: Large ribosomal subunit protein bL35 (67 aa).

Belongs to the bacterial ribosomal protein bL35 family.

The chain is Large ribosomal subunit protein bL35 from Bartonella henselae (strain ATCC 49882 / DSM 28221 / CCUG 30454 / Houston 1) (Rochalimaea henselae).